Here is a 406-residue protein sequence, read N- to C-terminus: Testis-specific Y-encoded-like protein 5 (406 aa).

The span at 1–25 (MSGRSRGRKSSRAKGRGKGRARARV) shows a compositional bias: basic residues. Disordered regions lie at residues 1-67 (MSGR…PAEL), 132-164 (IGNR…PKMA), and 382-406 (RGEK…RQPN). Positions 27–38 (AAAEDAWHDEKP) are enriched in basic and acidic residues. The span at 49-62 (AAAQVQAGAAQGGA) shows a compositional bias: low complexity. Residues 382 to 392 (RGEKGKEERPG) show a composition bias toward basic and acidic residues.

This sequence belongs to the nucleosome assembly protein (NAP) family. In terms of assembly, interacts with USP7.

Functionally, involved in modulation of cell growth and cellular response to gamma radiation probably via regulation of the Akt signaling pathway. Involved in regulation of p53/TP53. Suppresses p53/TP53 protein levels and promotes its ubiquitination; the function is dependent on USP7 and independent on MDM2. Proposed to displace p53/TP53 from interaction with USP7. The polypeptide is Testis-specific Y-encoded-like protein 5 (Tspyl5) (Mus musculus (Mouse)).